Reading from the N-terminus, the 419-residue chain is Carboxypeptidase A1 (419 aa).

The first 16 residues, 1 to 16 (MQGLLILSVLLGAALG), serve as a signal peptide directing secretion. Residues 17 to 110 (KEDFVGHQVL…QEQMFASQSR (94 aa)) constitute a propeptide, activation peptide. In terms of domain architecture, Peptidase M14 spans 121-414 (TYHTLDEIYD…LGVLTIMEHT (294 aa)). Zn(2+)-binding residues include His-179 and Glu-182. Residues 179 to 182 (HSRE), Arg-237, and 254 to 255 (NR) contribute to the substrate site. An intrachain disulfide couples Cys-248 to Cys-271. Position 306 (His-306) interacts with Zn(2+). Residues 307-308 (SY) and Tyr-358 each bind substrate. Glu-380 (proton donor/acceptor) is an active-site residue.

Belongs to the peptidase M14 family. Monomer. May form a complex with proelastase 2. It depends on Zn(2+) as a cofactor. In terms of tissue distribution, pancreas.

The protein localises to the secreted. The enzyme catalyses Release of a C-terminal amino acid, but little or no action with -Asp, -Glu, -Arg, -Lys or -Pro.. It catalyses the reaction leukotriene C4 + H2O = leukotriene F4 + glycine. Inhibited by interaction with the S.magnifica carboxypeptidase inhibitor SmCI. Functionally, carboxypeptidase that catalyzes the release of a C-terminal amino acid, but has little or no action with -Asp, -Glu, -Arg, -Lys or -Pro. Catalyzes the conversion of leukotriene C4 to leukotriene F4 via the hydrolysis of an amide bond. This Bos taurus (Bovine) protein is Carboxypeptidase A1 (CPA1).